The chain runs to 449 residues: RNA binding protein fox-1 homolog 2 (449 aa).

Positions 1–21 (MAEGGQAQQQPPQLGPGAAAR) are enriched in low complexity. The tract at residues 1–186 (MAEGGQAQQQ…STPKRLHVSN (186 aa)) is disordered. Polar residues-rich tracts occupy residues 77-86 (QGNQEPTTTP) and 118-138 (YAGQ…PHGE). The segment covering 139 to 176 (QSSNSPSNQNGSLTQTEGGAQTDGQQSQTQSSENSESK) has biased composition (low complexity). Residues 180–256 (KRLHVSNIPF…RKIEVNNATA (77 aa)) form the RRM domain. Residues R236, G241, Y268, and K273 each carry the omega-N-methylarginine modification. 2 positions are modified to asymmetric dimethylarginine: E285 and P317. Residues L318, L323, A336, R340, and G341 each carry the omega-N-methylarginine modification. An asymmetric dimethylarginine mark is found at R356 and R388. Asymmetric dimethylarginine; alternate occurs at positions 440 and 445. R440 and R445 each carry omega-N-methylarginine; alternate.

Interacts with ER-alpha N-terminal activation domain. Interacts with RBPMS; the interaction allows cooperative assembly of stable cell-specific alternative splicing regulatory complexes. As to expression, detected in brain neurons (at protein level). Detected in heart, brain, embryo, lung, liver, kidney and ovary.

The protein resides in the nucleus. It localises to the cytoplasm. RNA-binding protein that regulates alternative splicing events by binding to 5'-UGCAUGU-3' elements. Prevents binding of U2AF2 to the 3'-splice site. Regulates alternative splicing of tissue-specific exons and of differentially spliced exons during erythropoiesis. Seems to act as a coregulatory factor of ER-alpha. Together with RNA binding proteins RBPMS and MBNL1/2, activates vascular smooth muscle cells alternative splicing events. The sequence is that of RNA binding protein fox-1 homolog 2 (Rbfox2) from Mus musculus (Mouse).